The primary structure comprises 483 residues: Membrane-bound lytic murein transglycosylase F (483 aa).

The first 18 residues, 1 to 18 (MKGLVIRISVALALLLWA), serve as a signal peptide directing secretion. A non-LT domain region spans residues 19-270 (VDMVFPWQQI…RIEEKYFSHI (252 aa)). An LT domain region spans residues 272-483 (QFDYVDIKSY…IMITPQNSQD (212 aa)). Residue E315 is part of the active site.

The protein in the N-terminal section; belongs to the bacterial solute-binding protein 3 family. It in the C-terminal section; belongs to the transglycosylase Slt family.

Its subcellular location is the cell outer membrane. The catalysed reaction is Exolytic cleavage of the (1-&gt;4)-beta-glycosidic linkage between N-acetylmuramic acid (MurNAc) and N-acetylglucosamine (GlcNAc) residues in peptidoglycan, from either the reducing or the non-reducing ends of the peptidoglycan chains, with concomitant formation of a 1,6-anhydrobond in the MurNAc residue.. Murein-degrading enzyme that degrades murein glycan strands and insoluble, high-molecular weight murein sacculi, with the concomitant formation of a 1,6-anhydromuramoyl product. Lytic transglycosylases (LTs) play an integral role in the metabolism of the peptidoglycan (PG) sacculus. Their lytic action creates space within the PG sacculus to allow for its expansion as well as for the insertion of various structures such as secretion systems and flagella. The polypeptide is Membrane-bound lytic murein transglycosylase F (Actinobacillus succinogenes (strain ATCC 55618 / DSM 22257 / CCUG 43843 / 130Z)).